A 1330-amino-acid polypeptide reads, in one-letter code: Sister chromatid cohesion protein PDS5 homolog A (1330 aa).

Residues 387 to 423 (SLVNDQLLGFVRERTLDKRWRVRKEAMMGLAQLYKKY) form an HEAT repeat. Residues 1138–1330 (VNKPLSATGR…AAQRQIDLQR (193 aa)) are disordered. The span at 1160–1171 (SNISVNSELSSS) shows a compositional bias: low complexity. Over residues 1216-1225 (SDQATQGNST) the composition is skewed to polar residues.

It belongs to the PDS5 family. Interacts with the cohesin complex. Binds chromatin in a cohesin-dependent manner.

The protein localises to the nucleus. Its function is as follows. May regulate sister chromatid cohesion during mitosis and couple it to DNA replication. This Gallus gallus (Chicken) protein is Sister chromatid cohesion protein PDS5 homolog A.